Consider the following 645-residue polypeptide: DEAD-box ATP-dependent RNA helicase 46 (645 aa).

Disordered regions lie at residues 1-22 (MAAT…KPWK) and 44-137 (YERP…AGNE). In terms of domain architecture, WW spans 15-49 (PNLPKPWKGLVDSRTGYLYFWNPETNVTQYERPAS). Residues 60–72 (VSSSVQTNQQSSS) show a composition bias toward low complexity. Residues 77-91 (GKEDDKYGRGSDGPK) show a composition bias toward basic and acidic residues. The span at 108-136 (SSNDAASGLGNASSGGSSARGPPSSAAGN) shows a compositional bias: low complexity. The short motif at 161 to 189 (MSFEATGLPNELLREVYSAGFSAPSPIQA) is the Q motif element. Residues 192–366 (WPIAMQNRDI…ADLLVNPAQV (175 aa)) enclose the Helicase ATP-binding domain. An ATP-binding site is contributed by 205–212 (AKTGSGKT). The DEAD box motif lies at 314–317 (DEAD). A Helicase C-terminal domain is found at 395 to 539 (RLEQILRSQE…KVPPQVREMA (145 aa)). The segment at 532-645 (PPQVREMATR…FHEAMMMKNR (114 aa)) is disordered. A compositionally biased stretch (gly residues) spans 556-597 (SSGGGGGRGGYGDSGYGGRGESGYGSRGDSGYGGRGDSGGRG). The segment covering 598–608 (SWAPSRDSSGS) has biased composition (low complexity). Over residues 612–623 (GRERSRSPERFR) the composition is skewed to basic and acidic residues. Over residues 624–634 (GGPPSTSSPPR) the composition is skewed to low complexity.

This sequence belongs to the DEAD box helicase family. DDX5/DBP2 subfamily.

It catalyses the reaction ATP + H2O = ADP + phosphate + H(+). The sequence is that of DEAD-box ATP-dependent RNA helicase 46 (RH46) from Arabidopsis thaliana (Mouse-ear cress).